Consider the following 522-residue polypeptide: O-fucosyltransferase 38 (522 aa).

The helical; Signal-anchor for type II membrane protein transmembrane segment at 26–46 (AISLYLIFVFAFTIWVLVFSS) threads the bilayer. Over residues 54–67 (DHTKHQQQHHRDLI) the composition is skewed to basic and acidic residues. The disordered stretch occupies residues 54–73 (DHTKHQQQHHRDLIDSESFP). Asparagine 147 is a glycosylation site (N-linked (GlcNAc...) asparagine). Position 284–286 (284–286 (HLR)) interacts with substrate. A glycan (N-linked (GlcNAc...) asparagine) is linked at asparagine 325. Residues 475-496 (HKDRQGAPRRRKGPTQGIKGRA) are disordered.

It belongs to the glycosyltransferase GT106 family.

The protein resides in the membrane. It functions in the pathway glycan metabolism. This chain is O-fucosyltransferase 38, found in Arabidopsis thaliana (Mouse-ear cress).